We begin with the raw amino-acid sequence, 547 residues long: Glucose-6-phosphate isomerase (547 aa).

Glu-354 acts as the Proton donor in catalysis. Catalysis depends on residues His-385 and Lys-513.

This sequence belongs to the GPI family.

It localises to the cytoplasm. It carries out the reaction alpha-D-glucose 6-phosphate = beta-D-fructose 6-phosphate. It participates in carbohydrate biosynthesis; gluconeogenesis. The protein operates within carbohydrate degradation; glycolysis; D-glyceraldehyde 3-phosphate and glycerone phosphate from D-glucose: step 2/4. Its function is as follows. Catalyzes the reversible isomerization of glucose-6-phosphate to fructose-6-phosphate. This is Glucose-6-phosphate isomerase from Erwinia tasmaniensis (strain DSM 17950 / CFBP 7177 / CIP 109463 / NCPPB 4357 / Et1/99).